A 199-amino-acid polypeptide reads, in one-letter code: Ribosome maturation factor RimM (199 aa).

The region spanning 100–195 (ADEWYPKDLI…YLTLDPPGGL (96 aa)) is the PRC barrel domain.

Belongs to the RimM family. In terms of assembly, binds ribosomal protein uS19.

The protein localises to the cytoplasm. In terms of biological role, an accessory protein needed during the final step in the assembly of 30S ribosomal subunit, possibly for assembly of the head region. Essential for efficient processing of 16S rRNA. May be needed both before and after RbfA during the maturation of 16S rRNA. It has affinity for free ribosomal 30S subunits but not for 70S ribosomes. The sequence is that of Ribosome maturation factor RimM from Bifidobacterium longum (strain DJO10A).